The following is a 400-amino-acid chain: 3-phenylpropionate/cinnamic acid dioxygenase ferredoxin--NAD(+) reductase component (400 aa).

Residue T5–D36 participates in FAD binding. S146 to E174 serves as a coordination point for NAD(+).

It belongs to the bacterial ring-hydroxylating dioxygenase ferredoxin reductase family. This dioxygenase system consists of four proteins: the two subunits of the hydroxylase component (HcaE and HcaF), a ferredoxin (HcaC) and a ferredoxin reductase (HcaD). The cofactor is FAD.

The catalysed reaction is 2 reduced [2Fe-2S]-[ferredoxin] + NAD(+) + H(+) = 2 oxidized [2Fe-2S]-[ferredoxin] + NADH. It participates in aromatic compound metabolism; 3-phenylpropanoate degradation. Functionally, part of the multicomponent 3-phenylpropionate dioxygenase, that converts 3-phenylpropionic acid (PP) and cinnamic acid (CI) into 3-phenylpropionate-dihydrodiol (PP-dihydrodiol) and cinnamic acid-dihydrodiol (CI-dihydrodiol), respectively. In Escherichia coli (strain SMS-3-5 / SECEC), this protein is 3-phenylpropionate/cinnamic acid dioxygenase ferredoxin--NAD(+) reductase component.